The sequence spans 85 residues: UPF0386 protein Meso_1721 (85 aa).

This sequence belongs to the UPF0386 family.

The sequence is that of UPF0386 protein Meso_1721 from Chelativorans sp. (strain BNC1).